Here is a 388-residue protein sequence, read N- to C-terminus: Diacylglycerol O-acyltransferase 2 (388 aa).

Topologically, residues 1–69 are cytoplasmic; it reads MKTLIAAYSG…NRSKVEKQLQ (69 aa). The helical transmembrane segment at 70 to 88 threads the bilayer; the sequence is VISVLQWVLSFLVLGVACS. At 89–92 the chain is on the lumenal side; that stretch reads VILM. The helical transmembrane segment at 93 to 112 threads the bilayer; that stretch reads YTFCTDCWLIAVLYFTWLAF. Residues 113–388 are Cytoplasmic-facing; the sequence is DWNTPKKGGR…LPETEVLEVN (276 aa).

The protein belongs to the diacylglycerol acyltransferase family. Forms multimeric complexes consisting of several DGAT2 subunits. Interacts with SLC27A1 and this interaction is enhanced in the presence of ZFYVE1. In terms of tissue distribution, predominantly expressed in liver. Also expressed in testis.

The protein resides in the endoplasmic reticulum membrane. It is found in the lipid droplet. The protein localises to the cytoplasm. It localises to the perinuclear region. The enzyme catalyses an acyl-CoA + a 1,2-diacyl-sn-glycerol = a triacyl-sn-glycerol + CoA. It catalyses the reaction all-trans-retinol + an acyl-CoA = an all-trans-retinyl ester + CoA. It carries out the reaction 1,2-di-(9Z-octadecenoyl)-sn-glycerol + hexadecanoyl-CoA = 1,2-di-(9Z)-octadecenoyl-3-hexadecanoyl-sn-glycerol + CoA. The catalysed reaction is 1,2-di-(9Z-octadecenoyl)-sn-glycerol + (9Z)-octadecenoyl-CoA = 1,2,3-tri-(9Z-octadecenoyl)-glycerol + CoA. The enzyme catalyses 1,3-di-(9Z-octadecenoyl)-glycerol + (9Z)-octadecenoyl-CoA = 1,2,3-tri-(9Z-octadecenoyl)-glycerol + CoA. It catalyses the reaction 2,3-di-(9Z)-octadecenoyl-sn-glycerol + (9Z)-octadecenoyl-CoA = 1,2,3-tri-(9Z-octadecenoyl)-glycerol + CoA. It carries out the reaction 2-(9Z-octadecenoyl)-glycerol + hexadecanoyl-CoA = 1-hexadecanoyl-2-(9Z-octadecenoyl)-sn-glycerol + CoA. The catalysed reaction is 2-(9Z-octadecenoyl)-glycerol + (9Z)-octadecenoyl-CoA = 1,2-di-(9Z-octadecenoyl)-sn-glycerol + CoA. The enzyme catalyses all-trans-retinol + hexadecanoyl-CoA = all-trans-retinyl hexadecanoate + CoA. It catalyses the reaction 1-O-(9Z-octadecenyl)-glycerol + (9Z)-octadecenoyl-CoA = 1-O-(9Z-octadecyl)-3-(9Z-octadecenoyl)-glycerol + CoA. It carries out the reaction 1-(9Z-octadecenoyl)-glycerol + (9Z)-octadecenoyl-CoA = 1,2-di-(9Z-octadecenoyl)-glycerol + CoA. The protein operates within glycerolipid metabolism; triacylglycerol biosynthesis. Its activity is regulated as follows. Inhibited by niacin. Its function is as follows. Essential acyltransferase that catalyzes the terminal and only committed step in triacylglycerol synthesis by using diacylglycerol and fatty acyl CoA as substrates. Required for synthesis and storage of intracellular triglycerides. Probably plays a central role in cytosolic lipid accumulation. In liver, is primarily responsible for incorporating endogenously synthesized fatty acids into triglycerides. Also functions as an acyl-CoA retinol acyltransferase (ARAT). Also able to use 1-monoalkylglycerol (1-MAkG) as an acyl acceptor for the synthesis of monoalkyl-monoacylglycerol (MAMAG). This is Diacylglycerol O-acyltransferase 2 from Mus musculus (Mouse).